The primary structure comprises 308 residues: MTLLALVWLLLDATFLITLLWHLLQGCKSGHSLLCSVFQDLIRYGKTKTGLQRPAWLQWFDIPKRCFWHFYCVSLIWNGCLLWILLRLLLQSVPVPEWLQLVLHFLHAGSEPQILDRELSVILALALLWLHSLRRLLECLFVSVFSNGVIHLVQYCFGLGYYFLIGITVLTYCPLDRRTVSTDNLLTQCHWYHILGLALYIWASLHQYRCHCILAGLRKSASGNVINLNHSVPCGDWFERVSCPHYFAELLIYVSIAVVFGLLNTIWWLVVLYVLLNQALAALLCHEFYHEKFDTYPIHRKAFIPFIF.

Over 1–2 (MT) the chain is Cytoplasmic. The helical transmembrane segment at 3–23 (LLALVWLLLDATFLITLLWHL) threads the bilayer. The Lumenal portion of the chain corresponds to 24–65 (LQGCKSGHSLLCSVFQDLIRYGKTKTGLQRPAWLQWFDIPKR). A helical membrane pass occupies residues 66-86 (CFWHFYCVSLIWNGCLLWILL). Residues 87 to 120 (RLLLQSVPVPEWLQLVLHFLHAGSEPQILDRELS) lie on the Cytoplasmic side of the membrane. The helical transmembrane segment at 121-141 (VILALALLWLHSLRRLLECLF) threads the bilayer. Over 142-148 (VSVFSNG) the chain is Lumenal. A helical membrane pass occupies residues 149–169 (VIHLVQYCFGLGYYFLIGITV). Topologically, residues 170–184 (LTYCPLDRRTVSTDN) are cytoplasmic. A helical membrane pass occupies residues 185-205 (LLTQCHWYHILGLALYIWASL). Residues 206–255 (HQYRCHCILAGLRKSASGNVINLNHSVPCGDWFERVSCPHYFAELLIYVS) lie on the Lumenal side of the membrane. Residues 256-276 (IAVVFGLLNTIWWLVVLYVLL) traverse the membrane as a helical segment. Residues 277–308 (NQALAALLCHEFYHEKFDTYPIHRKAFIPFIF) lie on the Cytoplasmic side of the membrane.

Belongs to the steroid 5-alpha reductase family. Polyprenal reductase subfamily.

It is found in the endoplasmic reticulum membrane. It carries out the reaction a di-trans,poly-cis-dolichal + NADP(+) = a di-trans,poly-cis-polyprenal + NADPH + H(+). The enzyme catalyses a 3-oxo-5alpha-steroid + NADP(+) = a 3-oxo-Delta(4)-steroid + NADPH + H(+). It catalyses the reaction androst-4-ene-3,17-dione + NADPH + H(+) = 5alpha-androstan-3,17-dione + NADP(+). The catalysed reaction is 17beta-hydroxy-5alpha-androstan-3-one + NADP(+) = testosterone + NADPH + H(+). Its pathway is protein modification; protein glycosylation. In terms of biological role, plays a key role in early steps of protein N-linked glycosylation by being involved in the conversion of polyprenol into dolichol. Acts as a polyprenal reductase that mediates the reduction of polyprenal into dolichal in a NADP-dependent mechanism. Dolichols are required for the synthesis of dolichol-linked monosaccharides and the oligosaccharide precursor used for N-glycosylation. Also able to convert testosterone (T) into 5-alpha-dihydrotestosterone (DHT). This chain is Polyprenal reductase (srd5a3), found in Xenopus tropicalis (Western clawed frog).